Reading from the N-terminus, the 103-residue chain is NADH-quinone oxidoreductase subunit K (103 aa).

The next 3 membrane-spanning stretches (helical) occupy residues 5–25, 30–50, and 66–86; these read ISSYLMVALILFCVGLYGALT, VVVLLSIELMLNAVNINLVAF, and LFTMTVAAAEVAVGLAILIAL.

It belongs to the complex I subunit 4L family. In terms of assembly, NDH-1 is composed of 14 different subunits. Subunits NuoA, H, J, K, L, M, N constitute the membrane sector of the complex.

The protein resides in the cell membrane. The catalysed reaction is a quinone + NADH + 5 H(+)(in) = a quinol + NAD(+) + 4 H(+)(out). Functionally, NDH-1 shuttles electrons from NADH, via FMN and iron-sulfur (Fe-S) centers, to quinones in the respiratory chain. The immediate electron acceptor for the enzyme in this species is believed to be a menaquinone. Couples the redox reaction to proton translocation (for every two electrons transferred, four hydrogen ions are translocated across the cytoplasmic membrane), and thus conserves the redox energy in a proton gradient. This Brevibacillus brevis (strain 47 / JCM 6285 / NBRC 100599) protein is NADH-quinone oxidoreductase subunit K.